Reading from the N-terminus, the 288-residue chain is Quinate/shikimate dehydrogenase (288 aa).

Positions 71 and 107 each coordinate substrate. NAD(+) contacts are provided by residues 132–135 (AGGA), 155–158 (NRRD), Lys-205, 232–235 (CVYN), and Gly-255.

The protein belongs to the shikimate dehydrogenase family. In terms of assembly, homodimer.

The enzyme catalyses L-quinate + NAD(+) = 3-dehydroquinate + NADH + H(+). It carries out the reaction L-quinate + NADP(+) = 3-dehydroquinate + NADPH + H(+). It catalyses the reaction shikimate + NADP(+) = 3-dehydroshikimate + NADPH + H(+). The catalysed reaction is shikimate + NAD(+) = 3-dehydroshikimate + NADH + H(+). It functions in the pathway metabolic intermediate biosynthesis; chorismate biosynthesis; chorismate from D-erythrose 4-phosphate and phosphoenolpyruvate: step 4/7. Its function is as follows. The actual biological function of YdiB remains unclear, nor is it known whether 3-dehydroshikimate or quinate represents the natural substrate. Catalyzes the reversible NAD-dependent reduction of both 3-dehydroshikimate (DHSA) and 3-dehydroquinate to yield shikimate (SA) and quinate, respectively. It can use both NAD or NADP for catalysis, however it has higher catalytic efficiency with NAD. The chain is Quinate/shikimate dehydrogenase from Escherichia coli O81 (strain ED1a).